The primary structure comprises 227 residues: Probable methylthioribulose-1-phosphate dehydratase (227 aa).

Residue C87 participates in substrate binding. H105 and H107 together coordinate Zn(2+). E129 acts as the Proton donor/acceptor in catalysis. Residue H185 coordinates Zn(2+).

It belongs to the aldolase class II family. MtnB subfamily. Zn(2+) is required as a cofactor.

Its subcellular location is the cytoplasm. The catalysed reaction is 5-(methylsulfanyl)-D-ribulose 1-phosphate = 5-methylsulfanyl-2,3-dioxopentyl phosphate + H2O. Its pathway is amino-acid biosynthesis; L-methionine biosynthesis via salvage pathway; L-methionine from S-methyl-5-thio-alpha-D-ribose 1-phosphate: step 2/6. Catalyzes the dehydration of methylthioribulose-1-phosphate (MTRu-1-P) into 2,3-diketo-5-methylthiopentyl-1-phosphate (DK-MTP-1-P). The polypeptide is Probable methylthioribulose-1-phosphate dehydratase (Drosophila melanogaster (Fruit fly)).